Reading from the N-terminus, the 89-residue chain is Phosphocarrier protein HPr (89 aa).

The 88-residue stretch at 1 to 88 folds into the HPr domain; sequence MLEHELIVTN…ELFENRFNED (88 aa). The active-site Pros-phosphohistidine intermediate is histidine 15. A Phosphoserine; by HPrK/P modification is found at serine 46.

It belongs to the HPr family.

It localises to the cytoplasm. With respect to regulation, phosphorylation on Ser-46 inhibits the phosphoryl transfer from enzyme I to HPr. Its function is as follows. General (non sugar-specific) component of the phosphoenolpyruvate-dependent sugar phosphotransferase system (sugar PTS). This major carbohydrate active-transport system catalyzes the phosphorylation of incoming sugar substrates concomitantly with their translocation across the cell membrane. The phosphoryl group from phosphoenolpyruvate (PEP) is transferred to the phosphoryl carrier protein HPr by enzyme I. Phospho-HPr then transfers it to the PTS EIIA domain. This is Phosphocarrier protein HPr (ptsH) from Xylella fastidiosa (strain 9a5c).